Reading from the N-terminus, the 461-residue chain is MRVLIKNGIVVNADGQAKQDLLIESGIVRQLGTDISPQLPCEEIDASGCYVFPGGVDVHTHFNIDVGIARSCDDFFTGTRAAACGGTTTIIDHMGFGPNGCRLRHQLEVYRGYAAHKAVIDYSFHGVIQHINHAILDEIPMMVEEGLSSFKLYLTYQYKLNDDEVLQALRRLHESGALTTVHPENDAAIASKRAEFIAAGLTAPRYHALSRPLECEAEAIARMINLAQIAGNAPLYIVHLSNGLGLDYLRLARANHQPVWVETCPQYLLLDERSYDTEDGMKFILSPPLRNVREQDKLWCGISDGAIDVVATDHCTFSMAQRLQISKGDFSRCPNGLPGVENRMQLLFSSGVMTGRISPERFVELTSAMPARLFGLWPQKGLLAPGSDGDVVIIDPRQSQQIQHRHLHDNADYSPWEGFTCQGAIVRTLSRGEMIFCDGTFTGKAGRGRFLRRKPFVPPVL.

Residues His-59, His-61, and Lys-151 each contribute to the a divalent metal cation site. An N6-carboxylysine modification is found at Lys-151. Residue Tyr-156 coordinates substrate. The a divalent metal cation site is built by His-182 and His-239. Ser-286 lines the substrate pocket. Asp-313 lines the a divalent metal cation pocket. Asn-335 contributes to the substrate binding site.

The protein belongs to the metallo-dependent hydrolases superfamily. Hydantoinase/dihydropyrimidinase family. Homotetramer. Requires a divalent metal cation as cofactor. In terms of processing, carboxylation allows a single lysine to coordinate two divalent metal cations.

The enzyme catalyses D-5-phenylhydantoin + H2O = N-carbamoyl-D-phenylglycine + H(+). In terms of biological role, catalyzes the stereospecific hydrolysis of the cyclic amide bond of D-hydantoin derivatives with an aromatic side chains at the 5'-position. Has no activity on dihydropyrimidines. The physiological function is unknown. The polypeptide is D-phenylhydantoinase (Escherichia coli O127:H6 (strain E2348/69 / EPEC)).